A 54-amino-acid polypeptide reads, in one-letter code: Conotoxin mr5.4b (54 aa).

The first 14 residues, 1–14 (ILLLLIASAPSVDA), serve as a signal peptide directing secretion. Positions 15-40 (QLKTKDDVPLASFHANVKRTLQKLLN) are excised as a propeptide. A 4-carboxyglutamate modification is found at Glu-52.

It belongs to the conotoxin T superfamily. Post-translationally, contains 2 disulfide bonds that can be either 'C1-C3, C2-C4' or 'C1-C4, C2-C3', since these disulfide connectivities have been observed for conotoxins with cysteine framework V (for examples, see AC P0DQQ7 and AC P81755). Expressed by the venom duct.

It is found in the secreted. This Conus marmoreus (Marble cone) protein is Conotoxin mr5.4b.